The primary structure comprises 310 residues: tRNA-cytidine(32) 2-sulfurtransferase (310 aa).

The PP-loop motif signature appears at 47–52 (SGGKDS). [4Fe-4S] cluster contacts are provided by C122, C125, and C213.

The protein belongs to the TtcA family. In terms of assembly, homodimer. Mg(2+) is required as a cofactor. The cofactor is [4Fe-4S] cluster.

The protein localises to the cytoplasm. The enzyme catalyses cytidine(32) in tRNA + S-sulfanyl-L-cysteinyl-[cysteine desulfurase] + AH2 + ATP = 2-thiocytidine(32) in tRNA + L-cysteinyl-[cysteine desulfurase] + A + AMP + diphosphate + H(+). Its pathway is tRNA modification. In terms of biological role, catalyzes the ATP-dependent 2-thiolation of cytidine in position 32 of tRNA, to form 2-thiocytidine (s(2)C32). The sulfur atoms are provided by the cysteine/cysteine desulfurase (IscS) system. This is tRNA-cytidine(32) 2-sulfurtransferase from Serratia proteamaculans (strain 568).